A 606-amino-acid polypeptide reads, in one-letter code: Homeobox protein B-H1 (606 aa).

Residues 1–14 (MKDSMSILTQTPSE) show a composition bias toward polar residues. Disordered regions lie at residues 1–65 (MKDS…PAVA), 104–188 (YKQQ…HPHA), 261–340 (APAG…AFTD), and 508–606 (AAAN…QIQV). A compositionally biased stretch (basic residues) spans 21–40 (QLHHHLSHHHHPALHHHPVL). Over residues 41-65 (QHHYSLQQQHQQQQQQQPPAPPAVA) the composition is skewed to low complexity. Residues 108–118 (QQHHHHHHQSH) show a composition bias toward basic residues. Low complexity predominate over residues 119-138 (HNNNNHSGGSSGGTSPTHHN). Basic residues predominate over residues 166–188 (HHLHPQSHPHPHPHPHSHPHPHA). The span at 266–284 (ELDDSSDYHEENEDCDSDE) shows a compositional bias: acidic residues. The span at 286–295 (GSAGGGGGGS) shows a compositional bias: gly residues. Positions 297 to 314 (HMDDHSVCSNGGKDDDGN) are enriched in basic and acidic residues. The span at 315–325 (SIKSGSTSDMS) shows a compositional bias: polar residues. The homeobox DNA-binding region spans 331–390 (QRKARTAFTDHQLQTLEKSFERQKYLSVQERQELAHKLDLSDCQVKTWYQNRRTKWMRQT). Residues 513 to 522 (GGPPPPPPPS) are compositionally biased toward pro residues. The segment covering 523 to 534 (SAAAATGGSPSP) has biased composition (low complexity). Pro residues predominate over residues 561–576 (ASPPLPLPLARPPSTP).

It belongs to the Antp homeobox family. Abundant in the eye-antenna imaginal disk.

It is found in the nucleus. Its function is as follows. Functionally required in R1 and R6 receptor cells and primary pigment cells for normal eye development. This chain is Homeobox protein B-H1 (B-H1), found in Drosophila ananassae (Fruit fly).